The following is a 255-amino-acid chain: Poxin (255 aa).

This sequence belongs to the poxin family. Highly divergent.

The catalysed reaction is 2',3'-cGAMP + H2O = Gp(2'-5')Ap(3') + H(+). In terms of biological role, nuclease that cleaves 2',3'-cGAMP. The sequence is that of Poxin from Bombyx mori (Silk moth).